Here is a 254-residue protein sequence, read N- to C-terminus: MLAKRIVPCLDVKAGRVVKGVNFVGLRDAGDPVELAKLYNDQGADELVFLDIAATHEERAILIDVVYRTAEQVFIPLTVGGGIGDLDTIQALLDAGADKVSINSAAVRDPELIARAGERFGAQCIVLAIDARARAGGAGWEVYVRGGRTPTGLDAVAWAVEGERRGAGEILLTSMDADGTRAGYDLALTRAVAEAVQLPVIASGGAGNCEHIRTALTEGAAQAALLASLLHYGELTVEQIKAHLAAHGVPVRRG.

Catalysis depends on residues D11 and D130.

This sequence belongs to the HisA/HisF family. As to quaternary structure, heterodimer of HisH and HisF.

The protein localises to the cytoplasm. It catalyses the reaction 5-[(5-phospho-1-deoxy-D-ribulos-1-ylimino)methylamino]-1-(5-phospho-beta-D-ribosyl)imidazole-4-carboxamide + L-glutamine = D-erythro-1-(imidazol-4-yl)glycerol 3-phosphate + 5-amino-1-(5-phospho-beta-D-ribosyl)imidazole-4-carboxamide + L-glutamate + H(+). It participates in amino-acid biosynthesis; L-histidine biosynthesis; L-histidine from 5-phospho-alpha-D-ribose 1-diphosphate: step 5/9. Functionally, IGPS catalyzes the conversion of PRFAR and glutamine to IGP, AICAR and glutamate. The HisF subunit catalyzes the cyclization activity that produces IGP and AICAR from PRFAR using the ammonia provided by the HisH subunit. The chain is Imidazole glycerol phosphate synthase subunit HisF from Gloeobacter violaceus (strain ATCC 29082 / PCC 7421).